A 302-amino-acid chain; its full sequence is Sulfate adenylyltransferase subunit 2 (302 aa).

Belongs to the PAPS reductase family. CysD subfamily. As to quaternary structure, heterodimer composed of CysD, the smaller subunit, and CysN.

It carries out the reaction sulfate + ATP + H(+) = adenosine 5'-phosphosulfate + diphosphate. The protein operates within sulfur metabolism; hydrogen sulfide biosynthesis; sulfite from sulfate: step 1/3. In terms of biological role, with CysN forms the ATP sulfurylase (ATPS) that catalyzes the adenylation of sulfate producing adenosine 5'-phosphosulfate (APS) and diphosphate, the first enzymatic step in sulfur assimilation pathway. APS synthesis involves the formation of a high-energy phosphoric-sulfuric acid anhydride bond driven by GTP hydrolysis by CysN coupled to ATP hydrolysis by CysD. The polypeptide is Sulfate adenylyltransferase subunit 2 (Shigella boydii serotype 4 (strain Sb227)).